We begin with the raw amino-acid sequence, 515 residues long: Bifunctional purine biosynthesis protein PurH (515 aa).

The 144-residue stretch at Met1–Val144 folds into the MGS-like domain.

It belongs to the PurH family.

It carries out the reaction (6R)-10-formyltetrahydrofolate + 5-amino-1-(5-phospho-beta-D-ribosyl)imidazole-4-carboxamide = 5-formamido-1-(5-phospho-D-ribosyl)imidazole-4-carboxamide + (6S)-5,6,7,8-tetrahydrofolate. It catalyses the reaction IMP + H2O = 5-formamido-1-(5-phospho-D-ribosyl)imidazole-4-carboxamide. It participates in purine metabolism; IMP biosynthesis via de novo pathway; 5-formamido-1-(5-phospho-D-ribosyl)imidazole-4-carboxamide from 5-amino-1-(5-phospho-D-ribosyl)imidazole-4-carboxamide (10-formyl THF route): step 1/1. The protein operates within purine metabolism; IMP biosynthesis via de novo pathway; IMP from 5-formamido-1-(5-phospho-D-ribosyl)imidazole-4-carboxamide: step 1/1. The sequence is that of Bifunctional purine biosynthesis protein PurH from Persephonella marina (strain DSM 14350 / EX-H1).